A 343-amino-acid polypeptide reads, in one-letter code: Ribosomal RNA small subunit methyltransferase C (343 aa).

It belongs to the methyltransferase superfamily. RsmC family. In terms of assembly, monomer.

It is found in the cytoplasm. The catalysed reaction is guanosine(1207) in 16S rRNA + S-adenosyl-L-methionine = N(2)-methylguanosine(1207) in 16S rRNA + S-adenosyl-L-homocysteine + H(+). Functionally, specifically methylates the guanine in position 1207 of 16S rRNA in the 30S particle. In Escherichia coli O6:H1 (strain CFT073 / ATCC 700928 / UPEC), this protein is Ribosomal RNA small subunit methyltransferase C.